The chain runs to 961 residues: Vitamin B12-dependent ribonucleotide reductase (961 aa).

The tract at residues 1-23 (MTETTSGPARGSRTKGTKATKGL) is disordered. Residues Ser-143, 159–160 (AC), Gly-188, 364–368 (NPCSE), and 554–558 (PTGTI) contribute to the substrate site. A disulfide bond links Cys-160 and Cys-377. Asn-364 acts as the Proton acceptor in catalysis. The Cysteine radical intermediate role is filled by Cys-366. Catalysis depends on Glu-368, which acts as the Proton acceptor.

The protein belongs to the ribonucleoside diphosphate reductase class-2 family. As to quaternary structure, homotetramer. Requires adenosylcob(III)alamin as cofactor.

The enzyme catalyses a 2'-deoxyribonucleoside 5'-diphosphate + [thioredoxin]-disulfide + H2O = a ribonucleoside 5'-diphosphate + [thioredoxin]-dithiol. Its function is as follows. Catalyzes the reduction of ribonucleotides to deoxyribonucleotides. May function to provide a pool of deoxyribonucleotide precursors for DNA repair during oxygen limitation and/or for immediate growth after restoration of oxygen. The chain is Vitamin B12-dependent ribonucleotide reductase (nrdJ) from Streptomyces clavuligerus.